The following is a 242-amino-acid chain: Protein HTATIP2 (242 aa).

Alanine 2 carries the N-acetylalanine modification. Residues 2–25 (ADKEALPKLREDFKMQNKSVFILG) are required for interaction with elongation factor EEF1A1. Residues serine 27, glycine 28, glutamate 29, threonine 30, arginine 52, arginine 53, leucine 92, glycine 93, tyrosine 143, lysine 147, leucine 170, and arginine 178 each coordinate NADPH. Tyrosine 143 acts as the Proton acceptor in catalysis. The active site involves lysine 147.

As to quaternary structure, monomer. Forms homodimers during oxidative stress. Interacts (via N-terminus) with elongation factor EEF1A1 (via middle-region); the interaction is direct and competes with EEF1A1 binding to guanyl-nucleotide exchange factor EEF1B2, thereby inhibiting GDP for GTP exchange and reactivation of EEF1A1. Interacts with nuclear transport receptors XPO4, IPO5/RANBP5, IPO7, IPO9 and KPNB1 as well as GCN1L1/GCN1 and LRPPRC probably through their HEAT repeats. Binds NCOA5/CIA.

The protein resides in the cytoplasm. Functionally, represses translation by preventing reactivation of elongation factor eEF1A. May also inhibit nuclear import by competing with nuclear import substrates for binding to a subset of nuclear transport receptors. Has additionally been proposed to act as a redox sensor involved in cellular oxidative stress surveillance. The chain is Protein HTATIP2 from Mus musculus (Mouse).